The chain runs to 357 residues: Protein-L-isoaspartate O-methyltransferase domain-containing protein 1 (357 aa).

The N-myristoyl glycine moiety is linked to residue Gly2. The active site involves Ser64. 3 adoMet binding motif regions span residues 85 to 94 (LNLGSGTGYL), 160 to 164 (YDRIY), and 181 to 191 (LKVGGILVMPI). The segment at 240 to 250 (VRNLQDLARIY) is BC-box. The segment at 299 to 331 (PLDSEEDEKMEEDSKEEEEKEHIEAMKREEPPQ) is disordered. Positions 301-317 (DSEEDEKMEEDSKEEEE) are enriched in acidic residues. The span at 318-331 (KEHIEAMKREEPPQ) shows a compositional bias: basic and acidic residues. The segment at 341-344 (LPLP) is CUL-box.

The protein belongs to the methyltransferase superfamily. L-isoaspartyl/D-aspartyl protein methyltransferase family. As to quaternary structure, component of the probable ECS(PCMTD1) E3 ubiquitin-protein ligase complex, at least composed of CUL5, ELOB, ELOC, RBX2 and PCMTD1. Interacts (via the BC-box) with ELOB and ELOC; the interaction is direct and stabilizes PCMTD1.

It is found in the cytoplasm. The protein resides in the membrane. Its function is as follows. Substrate recognition component of an ECS (Elongin BC-CUL5-SOCS-box protein) E3 ubiquitin ligase complex which mediates the ubiquitination and subsequent proteasomal degradation of target proteins. Specifically binds to the methyltransferase cofactor S-adenosylmethionine (AdoMet) via the N-terminal AdoMet binding motif, but does not display methyltransferase activity. May provide an alternate maintenance pathway for modified proteins by acting as a damage-specific E3 ubiquitin ligase adaptor protein. This is Protein-L-isoaspartate O-methyltransferase domain-containing protein 1 (Pcmtd1) from Mus musculus (Mouse).